The chain runs to 527 residues: Amino acid transporter heavy chain SLC3A2 (527 aa).

The interval 1-31 (MSQDTEVDMKDVELNELEPEKQPMNAADGAA) is disordered. Residues 1-75 (MSQDTEVDMK…AGSPGWVRTR (75 aa)) are Cytoplasmic-facing. Ser2 is modified (phosphoserine). At Thr5 the chain carries Phosphothreonine. Residues 7 to 21 (VDMKDVELNELEPEK) are compositionally biased toward basic and acidic residues. Lys42 is covalently cross-linked (Glycyl lysine isopeptide (Lys-Gly) (interchain with G-Cter in ubiquitin)). The residue at position 58 (Ser58) is a Phosphoserine. Lys59 participates in a covalent cross-link: Glycyl lysine isopeptide (Lys-Gly) (interchain with G-Cter in SUMO2). A helical; Signal-anchor for type II membrane protein membrane pass occupies residues 76–98 (WALLLLFWLGWLGMLAGAVVIIV). Over 99 to 527 (RAPRCRELPV…GLLLQFPFVA (429 aa)) the chain is Extracellular. 4 N-linked (GlcNAc...) asparagine glycosylation sites follow: Asn166, Asn249, Asn259, and Asn263. Residue Ser300 is modified to Phosphoserine. Asn318, Asn386, and Asn400 each carry an N-linked (GlcNAc...) asparagine glycan. Ser421 is subject to Phosphoserine. Asn510 is a glycosylation site (N-linked (GlcNAc...) asparagine).

This sequence belongs to the SLC3A transporter family. In terms of assembly, disulfide-linked heterodimer with a non-glycosylated light chain (SLC7A5, SLC7A6, SLC7A7, SLC7A8, SLC7A10 or SLC7A11). Interacts with TLCD3A/CT120 and ICAM1. Constitutively and specifically associates with beta-1 integrins (alpha-2/beta-1, alpha-3/beta-1, alpha-5/beta-1 and alpha-6/beta-1), but minimally with alpha-4/beta-1. Interacts with LAPTM4B; recruits SLC3A2 and SLC7A5 to lysosomes to promote leucine uptake into these organelles and is required for mTORC1 activation. Phosphorylation on Ser-300 and on Ser-421 by ecto-protein kinases favors heterotypic cell-cell interactions. In terms of processing, N-glycosylated; N-glycosylation is crucial for trafficking and stability of SLC3A2 to the plasma membrane. As to expression, in brain expressed on capillary endothelia in cerebral cortex (at protein level). Highest expression in kidney, jejunum, ileum, colon, placenta, testis and spleen. Lower levels found in liver, lung and brain with weakest expression in heart. Expressed in retina, inner blood-retinal barrier of retina, retinal vascular endothelial cells. Also expressed in C6 glioma cells and in the retinal capillary endothelial cell line TR-iBRB2.

It is found in the apical cell membrane. The protein resides in the cell membrane. The protein localises to the cell junction. Its subcellular location is the lysosome membrane. It localises to the melanosome. It is found in the basolateral cell membrane. In terms of biological role, acts as a chaperone that facilitates biogenesis and trafficking of functional transporters heterodimers to the plasma membrane. Forms heterodimer with SLC7 family transporters (SLC7A5, SLC7A6, SLC7A7, SLC7A8, SLC7A10 and SLC7A11), a group of amino-acid antiporters. Heterodimers function as amino acids exchangers, the specificity of the substrate depending on the SLC7A subunit. Heterodimers formed by SLC3A2/SLC7A6 or SLC3A2/SLC7A7 mediate the uptake of dibasic amino acids. Heterodimer SLC3A2/SLC7A11 functions as an antiporter by mediating the exchange of extracellular anionic L-cystine and intracellular L-glutamate across the cellular plasma membrane. SLC3A2/SLC7A10 translocates small neutral L- and D-amino acids across the plasma membrane. SLC3A2/SLC75 or SLC3A2/SLC7A8 translocates neutral amino acids with broad specificity, thyroid hormones and L-DOPA. SLC3A2 is essential for plasma membrane localization, stability, and the transport activity of SLC7A5 and SLC7A8. When associated with LAPTM4B, the heterodimer SLC7A5 is recruited to lysosomes to promote leucine uptake into these organelles, and thereby mediates mTORC1 activation. Modulates integrin-related signaling and is essential for integrin-dependent cell spreading, migration and tumor progression. The sequence is that of Amino acid transporter heavy chain SLC3A2 from Rattus norvegicus (Rat).